We begin with the raw amino-acid sequence, 258 residues long: F-box/SPRY domain-containing protein 1 (258 aa).

An F-box domain is found at 6–54 (MEYAPNIPDNVLELIFSFLKLQDLRNCTLVCKSWYRFFCDENNEVWRAQ). In terms of domain architecture, B30.2/SPRY spans 64 to 256 (FKNDLLTVVP…ISMVYLGAPL (193 aa)).

Belongs to the FBXO45/Fsn family. As to quaternary structure, component of an E3 ubiquitin ligase complex composed of hiw and Fsn.

Its subcellular location is the synapse. The protein operates within protein modification; protein ubiquitination. Functionally, required in the presynaptic motoneuron to down-regulate the levels of wnd and restrain synaptic terminal growth at the neuromuscular junction (NMJ). This is F-box/SPRY domain-containing protein 1 from Anopheles gambiae (African malaria mosquito).